Here is a 244-residue protein sequence, read N- to C-terminus: Krueppel-like factor 9 (244 aa).

The tract at residues 80–142 is disordered; that stretch reads SVCSDSLESP…AKGKHASEKR (63 aa). Ser122 bears the Phosphoserine mark. C2H2-type zinc fingers lie at residues 143 to 167, 173 to 197, and 203 to 225; these read HKCP…YRVH, FPCT…YRTH, and FRCP…ARRH.

The protein belongs to the Sp1 C2H2-type zinc-finger protein family. Interacts with ZZEF1. In terms of tissue distribution, epidermis (at protein level).

The protein resides in the nucleus. Transcription factor that binds to GC box promoter elements. Selectively activates mRNA synthesis from genes containing tandem repeats of GC boxes but represses genes with a single GC box. Acts as an epidermal circadian transcription factor regulating keratinocyte proliferation. This Homo sapiens (Human) protein is Krueppel-like factor 9 (KLF9).